Consider the following 293-residue polypeptide: Deubiquitinase OTUD6B (293 aa).

Disordered regions lie at residues 1-43 (MEEV…RRKQ) and 57-114 (QKHE…LEKE). An OTU domain is found at 147–284 (LQIKEISSDG…GEHYNSVEPL (138 aa)). The tract at residues 152 to 158 (ISSDGHC) is cys-loop. Asp-155 is a catalytic residue. Cys-158 functions as the Nucleophile in the catalytic mechanism. The tract at residues 219–229 (VADTAAWGGQL) is variable-loop. The segment at 267–277 (YMRHAYGLGEH) is his-loop. Residue His-277 is part of the active site.

The enzyme catalyses Thiol-dependent hydrolysis of ester, thioester, amide, peptide and isopeptide bonds formed by the C-terminal Gly of ubiquitin (a 76-residue protein attached to proteins as an intracellular targeting signal).. Functionally, deubiquitinating enzyme that may play a role in the ubiquitin-dependent regulation of different cellular processes. This Danio rerio (Zebrafish) protein is Deubiquitinase OTUD6B (otud6b).